We begin with the raw amino-acid sequence, 88 residues long: Small ribosomal subunit protein bS20 (88 aa).

Belongs to the bacterial ribosomal protein bS20 family.

In terms of biological role, binds directly to 16S ribosomal RNA. The protein is Small ribosomal subunit protein bS20 of Coprothermobacter proteolyticus (strain ATCC 35245 / DSM 5265 / OCM 4 / BT).